A 265-amino-acid polypeptide reads, in one-letter code: NAD kinase 1 (265 aa).

D45 acts as the Proton acceptor in catalysis. Residues 45–46, H50, 122–123, R148, D150, and A185 contribute to the NAD(+) site; these read DG and NE.

This sequence belongs to the NAD kinase family. The cofactor is a divalent metal cation.

The protein resides in the cytoplasm. The enzyme catalyses NAD(+) + ATP = ADP + NADP(+) + H(+). Its function is as follows. Involved in the regulation of the intracellular balance of NAD and NADP, and is a key enzyme in the biosynthesis of NADP. Catalyzes specifically the phosphorylation on 2'-hydroxyl of the adenosine moiety of NAD to yield NADP. In Halalkalibacterium halodurans (strain ATCC BAA-125 / DSM 18197 / FERM 7344 / JCM 9153 / C-125) (Bacillus halodurans), this protein is NAD kinase 1.